The following is a 466-amino-acid chain: MLGRVLKSAARSQRGLRSFATTTNLGPFTEISTLSNGLTVATESQPHAQTATVGVWIDAGSRAETDKTNGTAHFLEHMAFKGTGRRSQHALELEVENIGAHLNAYTSREQTVYYAKSFSKDVPVAVDIISDILQNSKLESGAIERERDVILREQQEVDKQLEEVVFDHLHAVAFQGQPLGRTILGPKNNILSIQRDDLASYIQTNYTADRMVLVGTGGVDHQSLVKLAEKHFSSLPVSANPLALGRLSSERKPTFVGSEARIRDDELPTAHVAIAVEGVGWSSPDYFPMMVMQSIFGNWDRSLGASSLLSSRLSHIISSNSLANSFMSFSTSYSDTGLWGIYLVSENLMNLDDTLHFTLKEWTRMSIAPTEGEVERAKSQLKAGLLLSLDGTTAVAEDIGRQIVTSGKRMTPAQIENAVDAVSVDDIKRVAQKYLWDKDFALAAFGNIDGLKDYGRIRNDMSSMLY.

His73 contacts Zn(2+). Residue Glu76 is the Proton acceptor of the active site. Zn(2+) is bound by residues His77 and Glu153.

Belongs to the peptidase M16 family. As to quaternary structure, heterodimer of mppA (alpha) and mppB (beta) subunits, forming the mitochondrial processing protease (MPP) in which mppA is involved in substrate recognition and binding and mppB is the catalytic subunit. The cofactor is Zn(2+).

It localises to the mitochondrion matrix. The catalysed reaction is Release of N-terminal transit peptides from precursor proteins imported into the mitochondrion, typically with Arg in position P2.. With respect to regulation, binding to mppA is required for catalytic activity. Its function is as follows. Catalytic subunit of the essential mitochondrial processing protease (MPP), which cleaves the mitochondrial sequence off newly imported precursors proteins. Preferentially, cleaves after an arginine at position P2. The chain is Mitochondrial-processing peptidase subunit beta (mppB) from Lentinula edodes (Shiitake mushroom).